A 200-amino-acid polypeptide reads, in one-letter code: Holliday junction resolvase RecU (200 aa).

Residues 1-25 are disordered; it reads MTIRYPNGKRYNQASQPHKTPIKKH. Mg(2+) is bound by residues T85, D87, E100, and Q119.

This sequence belongs to the RecU family. Requires Mg(2+) as cofactor.

The protein resides in the cytoplasm. It catalyses the reaction Endonucleolytic cleavage at a junction such as a reciprocal single-stranded crossover between two homologous DNA duplexes (Holliday junction).. Endonuclease that resolves Holliday junction intermediates in genetic recombination. Cleaves mobile four-strand junctions by introducing symmetrical nicks in paired strands. Promotes annealing of linear ssDNA with homologous dsDNA. Required for DNA repair, homologous recombination and chromosome segregation. This Bacillus cereus (strain ZK / E33L) protein is Holliday junction resolvase RecU.